The chain runs to 397 residues: Tryptophan synthase beta chain (397 aa).

Lysine 87 is subject to N6-(pyridoxal phosphate)lysine.

It belongs to the TrpB family. In terms of assembly, tetramer of two alpha and two beta chains. The cofactor is pyridoxal 5'-phosphate.

It carries out the reaction (1S,2R)-1-C-(indol-3-yl)glycerol 3-phosphate + L-serine = D-glyceraldehyde 3-phosphate + L-tryptophan + H2O. The protein operates within amino-acid biosynthesis; L-tryptophan biosynthesis; L-tryptophan from chorismate: step 5/5. In terms of biological role, the beta subunit is responsible for the synthesis of L-tryptophan from indole and L-serine. This is Tryptophan synthase beta chain from Shigella boydii serotype 18 (strain CDC 3083-94 / BS512).